The chain runs to 505 residues: Probable cytosol aminopeptidase (505 aa).

2 residues coordinate Mn(2+): K269 and D274. The active site involves K281. 3 residues coordinate Mn(2+): D292, D351, and E353. R355 is a catalytic residue.

The protein belongs to the peptidase M17 family. The cofactor is Mn(2+).

It is found in the cytoplasm. The catalysed reaction is Release of an N-terminal amino acid, Xaa-|-Yaa-, in which Xaa is preferably Leu, but may be other amino acids including Pro although not Arg or Lys, and Yaa may be Pro. Amino acid amides and methyl esters are also readily hydrolyzed, but rates on arylamides are exceedingly low.. The enzyme catalyses Release of an N-terminal amino acid, preferentially leucine, but not glutamic or aspartic acids.. Functionally, presumably involved in the processing and regular turnover of intracellular proteins. Catalyzes the removal of unsubstituted N-terminal amino acids from various peptides. In Rhodococcus erythropolis (strain PR4 / NBRC 100887), this protein is Probable cytosol aminopeptidase.